The chain runs to 174 residues: Probable carboxylesterase Culp5 (174 aa).

The active-site Nucleophile is serine 67. Cysteine 137 and cysteine 144 are joined by a disulfide. Residue aspartate 141 is part of the active site. Histidine 153 serves as the catalytic Proton donor/acceptor.

The protein belongs to the cutinase family.

Its function is as follows. Does not exhibit cutinase activity. This chain is Probable carboxylesterase Culp5, found in Mycobacterium tuberculosis (strain ATCC 25618 / H37Rv).